Reading from the N-terminus, the 249-residue chain is MIDPIHQFNVEKIFTIGHIGNQEIAFTNSSAYMLLAVAIISLLMIGGSAGRQMVPGRLQSLAELSYEFVANTIRSTAGVEGLKFFPLVFSLFMFIMVSNMVGIIPYTFTIASHIIVTAALAFLVFFTVLIYGFKKNGLGFFKIFVPSGVPGFILPLVVFIEVFSFFLRPISHSVRLFANMLAGHIALKVFASFIPLLAGLGIAGYFGAVLPLGMVVALTALELLVAFLQAYVFAILTCIYLNDALHAGH.

6 helical membrane passes run 30-50 (SAYM…GSAG), 84-104 (FFPL…VGII), 113-133 (HIIV…IYGF), 143-163 (IFVP…IEVF), 196-216 (LLAG…GMVV), and 221-241 (LELL…CIYL).

It belongs to the ATPase A chain family. In terms of assembly, F-type ATPases have 2 components, CF(1) - the catalytic core - and CF(0) - the membrane proton channel. CF(1) has five subunits: alpha(3), beta(3), gamma(1), delta(1), epsilon(1). CF(0) has four main subunits: a, b, b' and c.

Its subcellular location is the cell inner membrane. Key component of the proton channel; it plays a direct role in the translocation of protons across the membrane. The polypeptide is ATP synthase subunit a (Rhodopseudomonas palustris (strain BisA53)).